The following is a 119-amino-acid chain: Large ribosomal subunit protein uL24 (119 aa).

This sequence belongs to the universal ribosomal protein uL24 family. As to quaternary structure, part of the 50S ribosomal subunit.

Functionally, one of two assembly initiator proteins, it binds directly to the 5'-end of the 23S rRNA, where it nucleates assembly of the 50S subunit. One of the proteins that surrounds the polypeptide exit tunnel on the outside of the subunit. The polypeptide is Large ribosomal subunit protein uL24 (Paenarthrobacter aurescens (strain TC1)).